A 247-amino-acid chain; its full sequence is Chymase (247 aa).

Positions 1–19 are cleaved as a signal peptide; it reads MNLHALCLLLLLLGSSTKA. Positions 20–21 are cleaved as a propeptide — activation peptide; sequence GE. A Peptidase S1 domain is found at 22–245; sequence IIGGTECIPH…YRPWINKILR (224 aa). An intrachain disulfide couples Cys-51 to Cys-67. His-66 serves as the catalytic Charge relay system. A glycan (N-linked (GlcNAc...) asparagine) is linked at Asn-80. Asp-110 serves as the catalytic Charge relay system. 2 cysteine pairs are disulfide-bonded: Cys-144–Cys-209 and Cys-175–Cys-188. Ser-203 acts as the Charge relay system in catalysis.

The protein belongs to the peptidase S1 family. Granzyme subfamily. In terms of tissue distribution, mast cells.

The protein resides in the secreted. The protein localises to the cytoplasmic granule. The catalysed reaction is Preferential cleavage: Phe-|-Xaa &gt; Tyr-|-Xaa &gt; Trp-|-Xaa &gt; Leu-|-Xaa.. In terms of biological role, major secreted protease of mast cells with suspected roles in vasoactive peptide generation, extracellular matrix degradation, and regulation of gland secretion. The polypeptide is Chymase (Cma1) (Rattus norvegicus (Rat)).